The following is a 310-amino-acid chain: MSRFRDRTEDFKDSVRNSAVSIGYNESKVASTMASFIIHKPKERSPFTKAAFKTLDSIKELELFMLKHRKDYVDLHRTTEQEKDSIEQEVAAFIKACKEQIDILINSIRNEEANSKGWLGLPADNFNADSIAHKHGVVLILSEKLHSVTAQFDQLRATRFQDIINRAMPRRKPKRVIKEATPINTTLGNSESIEPDEIQAQPRRLQQQQLLDDETQALQVELSNLLDGARQTETKMVEMSALNHLMATHVLQQAQQIEFLYDQAVEATKNVELGNKELSQAIQRNSSSRTFLLLFFFVLTFSVLFLDWYS.

The Cytoplasmic portion of the chain corresponds to 1–289 (MSRFRDRTED…QAIQRNSSSR (289 aa)). Residues 77–114 (RTTEQEKDSIEQEVAAFIKACKEQIDILINSIRNEEAN) are a coiled coil. A helical; Anchor for type IV membrane protein membrane pass occupies residues 290 to 310 (TFLLLFFFVLTFSVLFLDWYS).

It belongs to the syntaxin family. In terms of assembly, part of the t-SNARE complex. Interacts with MAG2.

It is found in the membrane. Functionally, vesicle trafficking protein that functions in the secretory pathway. The polypeptide is Syntaxin-81 (SYP81) (Arabidopsis thaliana (Mouse-ear cress)).